The chain runs to 250 residues: Probable transcriptional regulatory protein SYNPCC7002_A1640 (250 aa).

Belongs to the TACO1 family.

It is found in the cytoplasm. In Picosynechococcus sp. (strain ATCC 27264 / PCC 7002 / PR-6) (Agmenellum quadruplicatum), this protein is Probable transcriptional regulatory protein SYNPCC7002_A1640.